A 646-amino-acid chain; its full sequence is Macrolide export ATP-binding/permease protein MacB (646 aa).

In terms of domain architecture, ABC transporter spans Ile7 to Ile245. Gly43 to Ser50 serves as a coordination point for ATP. Helical transmembrane passes span Val274–Gly294, Val528–Val548, Phe572–Leu592, and Phe609–Leu629.

This sequence belongs to the ABC transporter superfamily. Macrolide exporter (TC 3.A.1.122) family. In terms of assembly, homodimer.

The protein resides in the cell inner membrane. Functionally, non-canonical ABC transporter that contains transmembrane domains (TMD), which form a pore in the inner membrane, and an ATP-binding domain (NBD), which is responsible for energy generation. Confers resistance against macrolides. The chain is Macrolide export ATP-binding/permease protein MacB from Brucella abortus (strain 2308).